Consider the following 880-residue polypeptide: Alanine--tRNA ligase (880 aa).

Zn(2+) contacts are provided by histidine 567, histidine 571, cysteine 669, and histidine 673.

It belongs to the class-II aminoacyl-tRNA synthetase family. It depends on Zn(2+) as a cofactor.

It localises to the cytoplasm. The catalysed reaction is tRNA(Ala) + L-alanine + ATP = L-alanyl-tRNA(Ala) + AMP + diphosphate. Catalyzes the attachment of alanine to tRNA(Ala) in a two-step reaction: alanine is first activated by ATP to form Ala-AMP and then transferred to the acceptor end of tRNA(Ala). Also edits incorrectly charged Ser-tRNA(Ala) and Gly-tRNA(Ala) via its editing domain. This chain is Alanine--tRNA ligase, found in Bacillus cereus (strain ATCC 14579 / DSM 31 / CCUG 7414 / JCM 2152 / NBRC 15305 / NCIMB 9373 / NCTC 2599 / NRRL B-3711).